We begin with the raw amino-acid sequence, 294 residues long: Elongation factor Ts, mitochondrial 2 (294 aa).

This sequence belongs to the EF-Ts family.

The protein resides in the mitochondrion. Functionally, associates with the EF-Tu.GDP complex and induces the exchange of GDP to GTP. It remains bound to the aminoacyl-tRNA.EF-Tu.GTP complex up to the GTP hydrolysis stage on the ribosome. This chain is Elongation factor Ts, mitochondrial 2, found in Paramecium tetraurelia.